The following is a 640-amino-acid chain: uncharacterized protein (640 aa).

The tract at residues 594–614 (QCSSDHCKPGSSETLPEATNE) is disordered.

This is an uncharacterized protein from Rattus norvegicus (Rat).